Consider the following 367-residue polypeptide: 2-aminoethylphosphonate--pyruvate transaminase (367 aa).

K193 carries the post-translational modification N6-(pyridoxal phosphate)lysine.

The protein belongs to the class-V pyridoxal-phosphate-dependent aminotransferase family. PhnW subfamily. Homodimer. Pyridoxal 5'-phosphate serves as cofactor.

The catalysed reaction is (2-aminoethyl)phosphonate + pyruvate = phosphonoacetaldehyde + L-alanine. In terms of biological role, involved in phosphonate degradation. In Vibrio parahaemolyticus serotype O3:K6 (strain RIMD 2210633), this protein is 2-aminoethylphosphonate--pyruvate transaminase.